We begin with the raw amino-acid sequence, 382 residues long: Chaperone protein DnaJ (382 aa).

One can recognise a J domain in the interval 5 to 69 (DYYEILGVSK…EKRARYDRFG (65 aa)). The CR-type zinc finger occupies 137–219 (GKETEIEIPR…CGGTGRVKRR (83 aa)). Positions 150, 153, 167, 170, 193, 196, 207, and 210 each coordinate Zn(2+). CXXCXGXG motif repeat units follow at residues 150 to 157 (CDTCQGSG), 167 to 174 (CPHCHGSG), 193 to 200 (CPVCGGTG), and 207 to 214 (CPTCGGTG). Positions 154–175 (QGSGAKPGTSPTSCPHCHGSGQ) are disordered.

This sequence belongs to the DnaJ family. In terms of assembly, homodimer. The cofactor is Zn(2+).

The protein resides in the cytoplasm. Functionally, participates actively in the response to hyperosmotic and heat shock by preventing the aggregation of stress-denatured proteins and by disaggregating proteins, also in an autonomous, DnaK-independent fashion. Unfolded proteins bind initially to DnaJ; upon interaction with the DnaJ-bound protein, DnaK hydrolyzes its bound ATP, resulting in the formation of a stable complex. GrpE releases ADP from DnaK; ATP binding to DnaK triggers the release of the substrate protein, thus completing the reaction cycle. Several rounds of ATP-dependent interactions between DnaJ, DnaK and GrpE are required for fully efficient folding. Also involved, together with DnaK and GrpE, in the DNA replication of plasmids through activation of initiation proteins. This is Chaperone protein DnaJ from Geobacillus kaustophilus (strain HTA426).